Consider the following 340-residue polypeptide: Large ribosomal subunit protein uL10 (340 aa).

Residues 305–340 (APQPAEEKVEEAEEEEEEEEEASEEEALAGLGALFG) are disordered. Over residues 312–331 (KVEEAEEEEEEEEEASEEEA) the composition is skewed to acidic residues.

It belongs to the universal ribosomal protein uL10 family. Part of the 50S ribosomal subunit. Forms part of the ribosomal stalk which helps the ribosome interact with GTP-bound translation factors. Forms a heptameric L10(L12)2(L12)2(L12)2 complex, where L10 forms an elongated spine to which the L12 dimers bind in a sequential fashion.

In terms of biological role, forms part of the ribosomal stalk, playing a central role in the interaction of the ribosome with GTP-bound translation factors. The protein is Large ribosomal subunit protein uL10 of Thermococcus gammatolerans (strain DSM 15229 / JCM 11827 / EJ3).